The chain runs to 498 residues: Protein flp (498 aa).

Helical transmembrane passes span 6 to 26, 389 to 409, 433 to 453, and 471 to 491; these read LYFL…IYIT, FNIV…FSAY, LSLC…YLIL, and LALI…LLFL.

The protein resides in the cell membrane. Its function is as follows. Its precise function is unknown. Has no penicillin-binding activity and is not involved in methicillin resistance. The polypeptide is Protein flp (flp) (Staphylococcus aureus (strain COL)).